Reading from the N-terminus, the 397-residue chain is MAKAKFERTKPHVNIGTIGHIDHGKTTLTAAITKVLHDQNPDINPYTPFEQIDKAPEERARGITISIAHVEYQTEKRHYAHVDCPGHADYIKNMITGAAQMDGAILVVSAADGPMPQTKEHVLLARQVGVPYIVVALNKADVVDDEEILQLVELEVRELLNSYEFPGDDVPVVRVSALKALEGDPKWTQSILDLLKACDDYIPEPVREIDKPFLMPIEDVFTITGRGTVVTGRVERGVVKVGDEVEIVGIHPKTLKTTVTGVEMFRKLLDEGRAGDNIGVLLRGIKREEVERGQVVCKPGSITPHTEFEAQVYVLSKDEGGRHTPFFNNYRPQFYFRTTDVTGVVHLPEGTEMVMPGDNTEMRVELIQPIAMEEGLRFAIREGGRTVGAGRVTKILK.

Positions 10-206 constitute a tr-type G domain; the sequence is KPHVNIGTIG…ACDDYIPEPV (197 aa). The interval 19–26 is G1; the sequence is GHIDHGKT. Residue 19 to 26 coordinates GTP; sequence GHIDHGKT. Thr-26 serves as a coordination point for Mg(2+). The interval 62-66 is G2; it reads GITIS. Residues 83 to 86 form a G3 region; sequence DCPG. GTP-binding positions include 83-87 and 138-141; these read DCPGH and NKAD. A G4 region spans residues 138 to 141; the sequence is NKAD. A G5 region spans residues 176–178; it reads SAL.

Belongs to the TRAFAC class translation factor GTPase superfamily. Classic translation factor GTPase family. EF-Tu/EF-1A subfamily. Monomer.

It is found in the cytoplasm. It catalyses the reaction GTP + H2O = GDP + phosphate + H(+). In terms of biological role, GTP hydrolase that promotes the GTP-dependent binding of aminoacyl-tRNA to the A-site of ribosomes during protein biosynthesis. The chain is Elongation factor Tu from Acidothermus cellulolyticus (strain ATCC 43068 / DSM 8971 / 11B).